Reading from the N-terminus, the 366-residue chain is Carbamoyl phosphate synthase small chain (366 aa).

The CPSase stretch occupies residues methionine 1–aspartate 171. L-glutamine is bound by residues serine 47, glycine 221, and glycine 223. Residues serine 173 to lysine 360 enclose the Glutamine amidotransferase type-1 domain. Catalysis depends on cysteine 248, which acts as the Nucleophile. Positions 249, 252, 290, 292, and 293 each coordinate L-glutamine. Active-site residues include histidine 333 and glutamate 335.

Belongs to the CarA family. Composed of two chains; the small (or glutamine) chain promotes the hydrolysis of glutamine to ammonia, which is used by the large (or ammonia) chain to synthesize carbamoyl phosphate. Tetramer of heterodimers (alpha,beta)4.

The catalysed reaction is hydrogencarbonate + L-glutamine + 2 ATP + H2O = carbamoyl phosphate + L-glutamate + 2 ADP + phosphate + 2 H(+). The enzyme catalyses L-glutamine + H2O = L-glutamate + NH4(+). Its pathway is amino-acid biosynthesis; L-arginine biosynthesis; carbamoyl phosphate from bicarbonate: step 1/1. The protein operates within pyrimidine metabolism; UMP biosynthesis via de novo pathway; (S)-dihydroorotate from bicarbonate: step 1/3. Functionally, small subunit of the glutamine-dependent carbamoyl phosphate synthetase (CPSase). CPSase catalyzes the formation of carbamoyl phosphate from the ammonia moiety of glutamine, carbonate, and phosphate donated by ATP, constituting the first step of 2 biosynthetic pathways, one leading to arginine and/or urea and the other to pyrimidine nucleotides. The small subunit (glutamine amidotransferase) binds and cleaves glutamine to supply the large subunit with the substrate ammonia. This is Carbamoyl phosphate synthase small chain from Staphylococcus aureus (strain COL).